The following is a 224-amino-acid chain: LexA repressor (224 aa).

A DNA-binding region (H-T-H motif) is located at residues 31 to 51 (RAEIATELGFRSANAAEEHLQ). Residues serine 142 and lysine 179 each act as for autocatalytic cleavage activity in the active site.

The protein belongs to the peptidase S24 family. Homodimer.

The enzyme catalyses Hydrolysis of Ala-|-Gly bond in repressor LexA.. In terms of biological role, represses a number of genes involved in the response to DNA damage (SOS response), including recA and lexA. In the presence of single-stranded DNA, RecA interacts with LexA causing an autocatalytic cleavage which disrupts the DNA-binding part of LexA, leading to derepression of the SOS regulon and eventually DNA repair. This chain is LexA repressor, found in Albidiferax ferrireducens (strain ATCC BAA-621 / DSM 15236 / T118) (Rhodoferax ferrireducens).